The following is a 466-amino-acid chain: Peptidoglycan-N-acetylglucosamine deacetylase PgdA (466 aa).

Over 1-5 (MKIRW) the chain is Cytoplasmic. The helical transmembrane segment at 6-26 (IRLSLVAILIIAVVFIGVIGF) threads the bilayer. The Extracellular portion of the chain corresponds to 27 to 466 (QKYQFSKSRN…FDKTDSRMVK (440 aa)). Residues 266-440 (KRIALTFDDG…KLKSQGYEFV (175 aa)) form the NodB homology domain. The Proton acceptor role is filled by aspartate 273. Residues aspartate 274, histidine 324, and histidine 328 each contribute to the Zn(2+) site. Tyrosine 365 lines the substrate pocket. Histidine 415 acts as the Proton donor in catalysis.

As to quaternary structure, homodimer. Interacts (via transmembrane domain) with PbpA1 (via transmembrane domain); the interaction is important for the peptidoglycan N-deacetylase function of this protein. The cofactor is Zn(2+).

It is found in the cell membrane. It localises to the secreted. The protein localises to the cell wall. The catalysed reaction is peptidoglycan-N-acetyl-D-glucosamine + H2O = peptidoglycan-D-glucosamine + acetate.. Functionally, catalyzes the deacetylation of N-acetylglucosamine (GlcNAc) residues in peptidoglycan (PG). Also deacetylates N-acetylated PG. Does not deacetylate N-acetylmuramic acid. Confers host lysozyme resistance. Critical for virulence and escape from innate immune response of the host. Required for intracellular survival of bacteria in macrophages of the host. Required for successful host colonization. Controls the production of inflammatory mediators in the bone marrow derived macrophages (BMMs) of the infected mouse. Suppresses Toll-like receptor 2 (TLR2)-dependent secretion of interleukin 6 (IL-6) and interferon-beta (IFN-beta) in the macrophages of the infected mouse. May decrease accessibility of pattern recognition receptors (PRRs) such as nucleotide-binding oligomerization domain protein (NOD) 1 of the host to the bacterial cell wall components. Protects cells from autolysis induced by lysozyme or by other autolysis-inducing agents. This chain is Peptidoglycan-N-acetylglucosamine deacetylase PgdA, found in Listeria monocytogenes serotype 1/2a (strain 10403S).